A 478-amino-acid polypeptide reads, in one-letter code: Lysosome membrane protein 2 (478 aa).

The Cytoplasmic portion of the chain corresponds to 1–4 (MGRC). The chain crosses the membrane as a helical span at residues 5-27 (CFYTAGTLSLLLLVTSVTLLVAR). At 28–433 (VFQKAVDQSI…RLKSMINTTL (406 aa)) the chain is on the lumenal side. Asn45, Asn68, and Asn105 each carry an N-linked (GlcNAc...) asparagine glycan. Positions 155 to 191 (IIEAMLKAYQQKLFVTHTVDELLWGYKDEILSLIHVF) are important for interaction with GBA1. N-linked (GlcNAc...) asparagine glycosylation is found at Asn206, Asn224, Asn249, and Asn304. Intrachain disulfides connect Cys274–Cys329 and Cys312–Cys318. N-linked (GlcNAc...) asparagine glycosylation is found at Asn325, Asn412, and Asn430. The helical transmembrane segment at 434-459 (IITNIPYIIMALGVFFGLVFTWLACK) threads the bilayer. Residues 460-478 (GQGSMDEGTADERAPLIRT) lie on the Cytoplasmic side of the membrane.

The protein belongs to the CD36 family. In terms of assembly, interacts with GBA1. (Microbial infection) Interacts with enterovirus 71 capsid proteins VP1 and VP2.

Its subcellular location is the lysosome membrane. Functionally, acts as a lysosomal receptor for glucosylceramidase (GBA1) targeting. (Microbial infection) Acts as a receptor for enterovirus 71. The polypeptide is Lysosome membrane protein 2 (SCARB2) (Homo sapiens (Human)).